Consider the following 336-residue polypeptide: F420-dependent glucose-6-phosphate dehydrogenase (336 aa).

Aspartate 40 provides a ligand contact to coenzyme F420-(gamma-Glu)n. Histidine 41 (proton donor) is an active-site residue. Coenzyme F420-(gamma-Glu)n contacts are provided by residues threonine 77 and 108 to 109; that span reads TG. Glutamate 110 functions as the Proton acceptor in the catalytic mechanism. Coenzyme F420-(gamma-Glu)n is bound by residues asparagine 113, 176–177, and 179–180; these read SG and AA. Substrate-binding residues include threonine 194, lysine 197, lysine 258, and arginine 282.

It belongs to the F420-dependent glucose-6-phosphate dehydrogenase family. Homodimer.

The enzyme catalyses oxidized coenzyme F420-(gamma-L-Glu)(n) + D-glucose 6-phosphate + H(+) = 6-phospho-D-glucono-1,5-lactone + reduced coenzyme F420-(gamma-L-Glu)(n). Its function is as follows. Catalyzes the coenzyme F420-dependent oxidation of glucose 6-phosphate (G6P) to 6-phosphogluconolactone. This chain is F420-dependent glucose-6-phosphate dehydrogenase, found in Microbacterium testaceum (strain StLB037).